The primary structure comprises 344 residues: S-adenosylmethionine:tRNA ribosyltransferase-isomerase (344 aa).

It belongs to the QueA family. As to quaternary structure, monomer.

It is found in the cytoplasm. The enzyme catalyses 7-aminomethyl-7-carbaguanosine(34) in tRNA + S-adenosyl-L-methionine = epoxyqueuosine(34) in tRNA + adenine + L-methionine + 2 H(+). It functions in the pathway tRNA modification; tRNA-queuosine biosynthesis. Functionally, transfers and isomerizes the ribose moiety from AdoMet to the 7-aminomethyl group of 7-deazaguanine (preQ1-tRNA) to give epoxyqueuosine (oQ-tRNA). This chain is S-adenosylmethionine:tRNA ribosyltransferase-isomerase, found in Rhizorhabdus wittichii (strain DSM 6014 / CCUG 31198 / JCM 15750 / NBRC 105917 / EY 4224 / RW1) (Sphingomonas wittichii).